Consider the following 332-residue polypeptide: 2,3-diketo-L-gulonate reductase (332 aa).

The active-site Proton donor is histidine 44. Residues 168–174 (ITMVDMS), 224–225 (WK), and 304–306 (GHE) each bind NAD(+).

This sequence belongs to the LDH2/MDH2 oxidoreductase family. DlgD subfamily. Homodimer.

The protein resides in the cytoplasm. It carries out the reaction 3-dehydro-L-gulonate + NAD(+) = 2,3-dioxo-L-gulonate + NADH + H(+). The catalysed reaction is 3-dehydro-L-gulonate + NADP(+) = 2,3-dioxo-L-gulonate + NADPH + H(+). In terms of biological role, catalyzes the reduction of 2,3-diketo-L-gulonate in the presence of NADH, to form 3-keto-L-gulonate. The sequence is that of 2,3-diketo-L-gulonate reductase from Salmonella typhi.